A 186-amino-acid chain; its full sequence is Ribosome-recycling factor (186 aa).

Belongs to the RRF family.

It is found in the cytoplasm. Functionally, responsible for the release of ribosomes from messenger RNA at the termination of protein biosynthesis. May increase the efficiency of translation by recycling ribosomes from one round of translation to another. The polypeptide is Ribosome-recycling factor (Rickettsia massiliae (strain Mtu5)).